Consider the following 314-residue polypeptide: Porphobilinogen deaminase (314 aa).

Position 241 is an S-(dipyrrolylmethanemethyl)cysteine (cysteine 241).

Belongs to the HMBS family. In terms of assembly, monomer. Dipyrromethane serves as cofactor.

It carries out the reaction 4 porphobilinogen + H2O = hydroxymethylbilane + 4 NH4(+). It functions in the pathway porphyrin-containing compound metabolism; protoporphyrin-IX biosynthesis; coproporphyrinogen-III from 5-aminolevulinate: step 2/4. The protein operates within porphyrin-containing compound metabolism; chlorophyll biosynthesis. Tetrapolymerization of the monopyrrole PBG into the hydroxymethylbilane pre-uroporphyrinogen in several discrete steps. In Chloroherpeton thalassium (strain ATCC 35110 / GB-78), this protein is Porphobilinogen deaminase.